We begin with the raw amino-acid sequence, 314 residues long: Olfactory receptor 5G3 (314 aa).

Over 1–24 (MEDKNQTVVTEFLLLGLTDHPYQK) the chain is Extracellular. N-linked (GlcNAc...) asparagine glycosylation occurs at asparagine 5. The chain crosses the membrane as a helical span at residues 25 to 45 (IVLFFMFLFVYLITLGGNLGM). Over 46 to 97 (ITLIWIDPRLHTPMYFFLRHLSFVDICSSSSVVPKMLCNIFAEKKDITFLGC) the chain is Cytoplasmic. Cysteine 97 and cysteine 179 are oxidised to a cystine. A helical membrane pass occupies residues 98–118 (AAQMWFFGLFEAAECFLLAAM). Residues 119–143 (AYDRYVAICKPLLYTLIMSQQVCMQ) are Extracellular-facing. The helical transmembrane segment at 144–164 (LVVGPYAMALISTMTHTIFTF) threads the bilayer. Topologically, residues 165-167 (CLP) are cytoplasmic. Residues 168–188 (FCGSNIINHFFCDIFPLLSLA) form a helical membrane-spanning segment. The Extracellular segment spans residues 189 to 196 (CADTWVNK). A helical membrane pass occupies residues 197–217 (FVLFVLAGAIGVLSGLIIMVS). At 218-237 (YICILMTILKIQTADGKQKA) the chain is on the cytoplasmic side. The helical transmembrane segment at 238–258 (FFTCFSHLAAVSILYGTLFLI) threads the bilayer. The Extracellular portion of the chain corresponds to 259 to 268 (YVRPSSSSSL). Residues 269-289 (GIYKVISLFYTVVIPMVNPLI) traverse the membrane as a helical segment. Residues 290–314 (YSLRNKEVKDAFRRKIERKKFIIGR) lie on the Cytoplasmic side of the membrane.

Belongs to the G-protein coupled receptor 1 family.

It is found in the cell membrane. Its function is as follows. Odorant receptor. This Homo sapiens (Human) protein is Olfactory receptor 5G3 (OR5G3).